Here is a 418-residue protein sequence, read N- to C-terminus: Serine--tRNA ligase (418 aa).

232 to 234 provides a ligand contact to L-serine; sequence TAE. Residues 263 to 265 and valine 279 each bind ATP; that span reads RRE. An L-serine-binding site is contributed by glutamate 286. Position 350–353 (350–353) interacts with ATP; sequence EISS. Serine 385 contacts L-serine.

It belongs to the class-II aminoacyl-tRNA synthetase family. Type-1 seryl-tRNA synthetase subfamily. As to quaternary structure, homodimer. The tRNA molecule binds across the dimer.

Its subcellular location is the cytoplasm. It carries out the reaction tRNA(Ser) + L-serine + ATP = L-seryl-tRNA(Ser) + AMP + diphosphate + H(+). The enzyme catalyses tRNA(Sec) + L-serine + ATP = L-seryl-tRNA(Sec) + AMP + diphosphate + H(+). It functions in the pathway aminoacyl-tRNA biosynthesis; selenocysteinyl-tRNA(Sec) biosynthesis; L-seryl-tRNA(Sec) from L-serine and tRNA(Sec): step 1/1. Functionally, catalyzes the attachment of serine to tRNA(Ser). Is also able to aminoacylate tRNA(Sec) with serine, to form the misacylated tRNA L-seryl-tRNA(Sec), which will be further converted into selenocysteinyl-tRNA(Sec). The polypeptide is Serine--tRNA ligase (Leptospira biflexa serovar Patoc (strain Patoc 1 / Ames)).